A 504-amino-acid chain; its full sequence is Maturase K (504 aa).

It belongs to the intron maturase 2 family. MatK subfamily.

The protein resides in the plastid. The protein localises to the chloroplast. Usually encoded in the trnK tRNA gene intron. Probably assists in splicing its own and other chloroplast group II introns. The polypeptide is Maturase K (Pachira aquatica (Guiana chestnut)).